A 264-amino-acid chain; its full sequence is Regulatory protein RecX (264 aa).

This sequence belongs to the RecX family.

The protein localises to the cytoplasm. In terms of biological role, negatively modulates RecA activity. This Bacillus subtilis (strain 168) protein is Regulatory protein RecX.